We begin with the raw amino-acid sequence, 367 residues long: Anhydro-N-acetylmuramic acid kinase (367 aa).

11–18 (GTSLDGVD) is an ATP binding site.

Belongs to the anhydro-N-acetylmuramic acid kinase family.

The enzyme catalyses 1,6-anhydro-N-acetyl-beta-muramate + ATP + H2O = N-acetyl-D-muramate 6-phosphate + ADP + H(+). The protein operates within amino-sugar metabolism; 1,6-anhydro-N-acetylmuramate degradation. It functions in the pathway cell wall biogenesis; peptidoglycan recycling. Its function is as follows. Catalyzes the specific phosphorylation of 1,6-anhydro-N-acetylmuramic acid (anhMurNAc) with the simultaneous cleavage of the 1,6-anhydro ring, generating MurNAc-6-P. Is required for the utilization of anhMurNAc either imported from the medium or derived from its own cell wall murein, and thus plays a role in cell wall recycling. The protein is Anhydro-N-acetylmuramic acid kinase of Bradyrhizobium diazoefficiens (strain JCM 10833 / BCRC 13528 / IAM 13628 / NBRC 14792 / USDA 110).